We begin with the raw amino-acid sequence, 596 residues long: DNA polymerase kappa (596 aa).

The UmuC domain occupies 85–320 (CVCIDMDAYF…LPIRKVGGIG (236 aa)). Asp-89 and Asp-180 together coordinate Mg(2+). Glu-181 is an active-site residue. A UBZ4-type zinc finger spans residues 516–545 (TRPCPICGTDVENRLDVMNCHVDECILKVQ). Zn(2+)-binding residues include Cys-519, Cys-522, His-536, and Cys-540. The disordered stretch occupies residues 559 to 584 (NKSTQKPERPSTKKRKLQEKRPKAKK). A compositionally biased stretch (basic residues) spans 570-584 (TKKRKLQEKRPKAKK).

This sequence belongs to the DNA polymerase type-Y family. Mg(2+) is required as a cofactor. Mn(2+) serves as cofactor.

It localises to the nucleus. The catalysed reaction is DNA(n) + a 2'-deoxyribonucleoside 5'-triphosphate = DNA(n+1) + diphosphate. Its function is as follows. DNA polymerase specifically involved in DNA repair. Plays an important role in translesion synthesis, where the normal high-fidelity DNA polymerases cannot proceed and DNA synthesis stalls. Depending on the context, it inserts the correct base, but causes frequent base transitions, transversions and frameshifts. Lacks 3'-5' proofreading exonuclease activity. Forms a Schiff base with 5'-deoxyribose phosphate at abasic sites, but does not have lyase activity. The sequence is that of DNA polymerase kappa (polk-1) from Caenorhabditis elegans.